Here is a 168-residue protein sequence, read N- to C-terminus: Myelin basic protein (168 aa).

N-acetylalanine is present on alanine 1. Residues serine 7 and serine 12 each carry the phosphoserine modification. Phosphotyrosine is present on tyrosine 14. Position 17 is a phosphothreonine (threonine 17). Serine 19 bears the Phosphoserine mark. Threonine 20 is subject to Phosphothreonine. Citrulline occurs at positions 25 and 31. Phosphothreonine is present on threonine 35. Serine 40 carries the post-translational modification Phosphoserine. Residues 42–84 form a disordered region; that stretch reads GRFFSSDRGAPKRGSGKDHAARTTHYGSLPQKSGHRPQDENPV. Omega-N-methylarginine occurs at positions 43 and 49. An induces experimental autoimmune encephalomyelitis (EAE) region spans residues 45–86; it reads FSSDRGAPKRGSGKDHAARTTHYGSLPQKSGHRPQDENPVVH. Serine 56 carries the post-translational modification Phosphoserine. Threonine 65 is modified (phosphothreonine). Tyrosine 67 is modified (phosphotyrosine). Phosphoserine is present on serine 74. Residues threonine 93 and threonine 96 each carry the phosphothreonine modification. Glutamine 101 is subject to Deamidated glutamine; partial. Position 105 is an omega-N-methylarginine; alternate (arginine 105). The residue at position 105 (arginine 105) is a Symmetric dimethylarginine; alternate. At serine 113 the chain carries Phosphoserine. Lysine 120 is subject to N6-acetyllysine. Citrulline is present on arginine 128. Glutamine 145 bears the Deamidated glutamine mark. Position 157 is a citrulline (arginine 157). Serine 159 is modified (phosphoserine). Position 163 is a phosphoserine; by UHMK1 (serine 163). Arginine 168 carries the post-translational modification Citrulline.

The protein belongs to the myelin basic protein family. Homodimer. As in other animals, several charge isomers may be produced as a result of optional post-translational modifications, such as phosphorylation of serine or threonine residues, deamidation of glutamine or asparagine residues, citrullination and methylation of arginine residues. Post-translationally, phosphorylated by TAOK2, VRK2, MAPK11, MAPK12, MAPK14 and MINK1. In terms of processing, proteolytically cleaved in B cell lysosomes by cathepsin CTSG which degrades the major immunogenic MBP epitope and prevents the activation of MBP-specific autoreactive T cells. In terms of tissue distribution, found in both the central and the peripheral nervous system.

The protein resides in the myelin membrane. In terms of biological role, is, with PLP, the most abundant protein component of the myelin membrane in the CNS. Has a role in both the formation and stabilization of this compact multilayer arrangement of bilayers. Each splice variant and charge isomer may have a specialized function in the assembly of an optimized, biochemically functional myelin membrane. The protein is Myelin basic protein (MBP) of Oryctolagus cuniculus (Rabbit).